The following is a 278-amino-acid chain: Heat stress transcription factor C-2b (278 aa).

The segment covering 105–114 (AAGGGGGGGG) has biased composition (gly residues). Residues 105 to 132 (AAGGGGGGGGGKRRDASADGGGGGGDED) form a disordered region. Residues 143 to 179 (LKQEQRTIDDRVAAMWRRVQETERRPKQMLAFLLKVV) form a hydrophobic repeat HR-A/B region. Positions 219–222 (KRAR) match the Nuclear localization signal motif.

Belongs to the HSF family. Class C subfamily. As to quaternary structure, homotrimer. Post-translationally, exhibits temperature-dependent phosphorylation.

It localises to the nucleus. Functionally, transcriptional regulator that specifically binds DNA of heat shock promoter elements (HSE). In Oryza sativa subsp. japonica (Rice), this protein is Heat stress transcription factor C-2b (HSFC2B).